Consider the following 323-residue polypeptide: Delta(7)-sterol 5(6)-desaturase ERG3B (323 aa).

A run of 3 helical transmembrane segments spans residues 67–87, 112–132, and 150–170; these read ASILMIAGFGAAFIYVISAAL, IQSSFFAIPIIDLLTLPFFLG, and SWLAISTILYMVFNDLGIYWI. A Fatty acid hydroxylase domain is found at 157–285; it reads ILYMVFNDLG…YFTWADNYWG (129 aa). Positions 171-175 match the Histidine box-1 motif; that stretch reads HRLEH. A Histidine box-2 motif is present at residues 184–188; sequence HKPHH. A Histidine box-3 motif is present at residues 262–266; it reads HTLHH.

The protein belongs to the sterol desaturase family.

The protein localises to the endoplasmic reticulum membrane. It carries out the reaction episterol + 2 Fe(II)-[cytochrome b5] + O2 + 2 H(+) = 5-dehydroepisterol + 2 Fe(III)-[cytochrome b5] + 2 H2O. It functions in the pathway steroid metabolism; ergosterol biosynthesis. C-5 sterol desaturase; part of the third module of ergosterol biosynthesis pathway that includes the late steps of the pathway. ERG3A and ERG3BB catalyze the introduction of a C-5 double bond in the B ring to produce 5-dehydroepisterol. The third module or late pathway involves the ergosterol synthesis itself through consecutive reactions that mainly occur in the endoplasmic reticulum (ER) membrane. Firstly, the squalene synthase ERG9 catalyzes the condensation of 2 farnesyl pyrophosphate moieties to form squalene, which is the precursor of all steroids. Squalene synthase is crucial for balancing the incorporation of farnesyl diphosphate (FPP) into sterol and nonsterol isoprene synthesis. Secondly, squalene is converted into lanosterol by the consecutive action of the squalene epoxidase ERG1 and the lanosterol synthase ERG7. Then, the delta(24)-sterol C-methyltransferase ERG6 methylates lanosterol at C-24 to produce eburicol. Eburicol is the substrate of the sterol 14-alpha demethylase encoded by CYP51A, CYP51B and CYP51C, to yield 4,4,24-trimethyl ergosta-8,14,24(28)-trienol. CYP51B encodes the enzyme primarily responsible for sterol 14-alpha-demethylation, and plays an essential role in ascospore formation. CYP51A encodes an additional sterol 14-alpha-demethylase, induced on ergosterol depletion and responsible for the intrinsic variation in azole sensitivity. The third CYP51 isoform, CYP51C, does not encode a sterol 14-alpha-demethylase, but is required for full virulence on host wheat ears. The C-14 reductase ERG24 then reduces the C14=C15 double bond which leads to 4,4-dimethylfecosterol. A sequence of further demethylations at C-4, involving the C-4 demethylation complex containing the C-4 methylsterol oxidases ERG25, the sterol-4-alpha-carboxylate 3-dehydrogenase ERG26 and the 3-keto-steroid reductase ERG27, leads to the production of fecosterol via 4-methylfecosterol. ERG28 has a role as a scaffold to help anchor ERG25, ERG26 and ERG27 to the endoplasmic reticulum. The C-8 sterol isomerase ERG2 then catalyzes the reaction which results in unsaturation at C-7 in the B ring of sterols and thus converts fecosterol to episterol. The sterol-C5-desaturases ERG3A and ERG3BB then catalyze the introduction of a C-5 double bond in the B ring to produce 5-dehydroepisterol. The C-22 sterol desaturases ERG5A and ERG5B further convert 5-dehydroepisterol into ergosta-5,7,22,24(28)-tetraen-3beta-ol by forming the C-22(23) double bond in the sterol side chain. Finally, ergosta-5,7,22,24(28)-tetraen-3beta-ol is substrate of the C-24(28) sterol reductase ERG4 to produce ergosterol. This chain is Delta(7)-sterol 5(6)-desaturase ERG3B, found in Gibberella zeae (strain ATCC MYA-4620 / CBS 123657 / FGSC 9075 / NRRL 31084 / PH-1) (Wheat head blight fungus).